A 387-amino-acid chain; its full sequence is Pepsin II-1 (387 aa).

The signal sequence occupies residues 1 to 15 (MKWLLLLGLLALSEC). A propeptide spans 16–59 (IVHKVPLVRKKSLRKNLIEKGLLQDYLKTHTPNLATKYFPKETF) (activation peptide). Residues 75 to 384 (YFGTISIGTP…DRANNQVGLA (310 aa)) form the Peptidase A1 domain. Residue Asp-93 is part of the active site. A disulfide bridge links Cys-106 with Cys-111. Ser-129 carries the phosphoserine modification. A disulfide bridge links Cys-267 with Cys-271. Residue Asp-276 is part of the active site. An intrachain disulfide couples Cys-310 to Cys-343.

Belongs to the peptidase A1 family.

The protein localises to the secreted. The enzyme catalyses Preferential cleavage: hydrophobic, preferably aromatic, residues in P1 and P1' positions. Cleaves 1-Phe-|-Val-2, 4-Gln-|-His-5, 13-Glu-|-Ala-14, 14-Ala-|-Leu-15, 15-Leu-|-Tyr-16, 16-Tyr-|-Leu-17, 23-Gly-|-Phe-24, 24-Phe-|-Phe-25 and 25-Phe-|-Tyr-26 bonds in the B chain of insulin.. In terms of biological role, shows particularly broad specificity; although bonds involving phenylalanine and leucine are preferred, many others are also cleaved to some extent. The sequence is that of Pepsin II-1 from Oryctolagus cuniculus (Rabbit).